Reading from the N-terminus, the 270-residue chain is 4-hydroxy-tetrahydrodipicolinate reductase (270 aa).

Residues 9-14 (GSGGRM) and Glu-35 contribute to the NAD(+) site. Arg-36 contributes to the NADP(+) binding site. Residues 99–101 (GTT) and 123–126 (ASNY) each bind NAD(+). The active-site Proton donor/acceptor is the His-156. Residue His-157 coordinates (S)-2,3,4,5-tetrahydrodipicolinate. Lys-160 functions as the Proton donor in the catalytic mechanism. 166-167 (GT) provides a ligand contact to (S)-2,3,4,5-tetrahydrodipicolinate.

Belongs to the DapB family.

It is found in the cytoplasm. The enzyme catalyses (S)-2,3,4,5-tetrahydrodipicolinate + NAD(+) + H2O = (2S,4S)-4-hydroxy-2,3,4,5-tetrahydrodipicolinate + NADH + H(+). It carries out the reaction (S)-2,3,4,5-tetrahydrodipicolinate + NADP(+) + H2O = (2S,4S)-4-hydroxy-2,3,4,5-tetrahydrodipicolinate + NADPH + H(+). It participates in amino-acid biosynthesis; L-lysine biosynthesis via DAP pathway; (S)-tetrahydrodipicolinate from L-aspartate: step 4/4. In terms of biological role, catalyzes the conversion of 4-hydroxy-tetrahydrodipicolinate (HTPA) to tetrahydrodipicolinate. This Histophilus somni (strain 2336) (Haemophilus somnus) protein is 4-hydroxy-tetrahydrodipicolinate reductase.